A 240-amino-acid polypeptide reads, in one-letter code: Protein FATTY ACID EXPORT 2, chloroplastic (240 aa).

A chloroplast-targeting transit peptide spans 1 to 84 (MADLILSSSS…TANCVDSGVK (84 aa)). A compositionally biased stretch (gly residues) spans 97–113 (GGGIGGDKFGGGGGGGD). A disordered region spans residues 97–134 (GGGIGGDKFGGGGGGGDGNDDGGEDDKEESDGKKSTPL). A compositionally biased stretch (acidic residues) spans 114–125 (GNDDGGEDDKEE). Helical transmembrane passes span 164–184 (SLLA…QLPT), 186–206 (PVLA…VMGT), and 214–234 (IFPA…YIHG).

It belongs to the TMEM14 family.

Its subcellular location is the plastid. It is found in the chloroplast membrane. Functionally, may be involved in free fatty acids export from the plastids. This chain is Protein FATTY ACID EXPORT 2, chloroplastic, found in Arabidopsis thaliana (Mouse-ear cress).